We begin with the raw amino-acid sequence, 88 residues long: Putative membrane protein insertion efficiency factor (88 aa).

This sequence belongs to the UPF0161 family.

It localises to the cell membrane. Functionally, could be involved in insertion of integral membrane proteins into the membrane. The sequence is that of Putative membrane protein insertion efficiency factor (yrcB) from Lactococcus lactis subsp. lactis (strain IL1403) (Streptococcus lactis).